Reading from the N-terminus, the 517-residue chain is Serine hydroxymethyltransferase 1, mitochondrial (517 aa).

The transit peptide at 1-31 directs the protein to the mitochondrion; that stretch reads MAMALALRRLSSSADKPLQRLFNGGHLYSMS. Lys287 bears the N6-(pyridoxal phosphate)lysine mark.

Belongs to the SHMT family. Homotetramer. The cofactor is pyridoxal 5'-phosphate.

The protein localises to the mitochondrion. It catalyses the reaction (6R)-5,10-methylene-5,6,7,8-tetrahydrofolate + glycine + H2O = (6S)-5,6,7,8-tetrahydrofolate + L-serine. Its pathway is one-carbon metabolism; tetrahydrofolate interconversion. Catalyzes the interconversion of serine and glycine. This is Serine hydroxymethyltransferase 1, mitochondrial from Flaveria pringlei.